Consider the following 974-residue polypeptide: Zinc finger protein 280D (974 aa).

Glycyl lysine isopeptide (Lys-Gly) (interchain with G-Cter in SUMO2) cross-links involve residues K44, K46, K86, K99, K138, K201, K222, K245, K287, and K304. Residues 188–216 form a disordered region; the sequence is KRPSGSDISSVNPKKPKPSENTSGIDASS. 2 consecutive C2H2-type zinc fingers follow at residues 333 to 355 and 370 to 393; these read FKCF…MKHH and TTCQ…ESTH. The segment at 400–424 adopts a C2H2-type 3; degenerate zinc-finger fold; it reads TICKICELSFETEQILLQHMKDNHK. C2H2-type zinc fingers lie at residues 430 to 453 and 459 to 481; these read YICQ…RTSH and LLCP…YMKH. Disordered stretches follow at residues 507–624, 751–797, and 815–974; these read TQHH…KVNT, IKTE…EGTG, and VTVS…EERS. Positions 539–557 are enriched in low complexity; the sequence is SGSSVTPSISPSTSTLQLS. The residue at position 557 (S557) is a Phosphoserine. Residues 571–587 show a composition bias toward polar residues; the sequence is KLTTSTPNTTISDPSKA. Low complexity predominate over residues 591 to 611; the sequence is KSNGSKSKNKSKVSNMQKKQS. A compositionally biased stretch (polar residues) spans 612–624; the sequence is TLSSSNKKSKVNT. Residue K752 forms a Glycyl lysine isopeptide (Lys-Gly) (interchain with G-Cter in SUMO2) linkage. A compositionally biased stretch (basic and acidic residues) spans 763-775; the sequence is VSKETARHSRAEG. Polar residues predominate over residues 817-829; the sequence is VSDTENVSSSKNI. Residues 830 to 860 show a composition bias toward basic and acidic residues; sequence LSHDPDVGTDTMEKEEKTHHACQEMELKVDQ. Residues 861–884 are compositionally biased toward polar residues; it reads SSESTNPTEAELSSETRQGLQLTS. S904 and S907 each carry phosphoserine. Polar residues predominate over residues 938–950; sequence SANTSDTVSDQTG.

The protein localises to the nucleus. May function as a transcription factor. The polypeptide is Zinc finger protein 280D (Znf280d) (Mus musculus (Mouse)).